The sequence spans 245 residues: tRNA (guanine-N(1)-)-methyltransferase (245 aa).

S-adenosyl-L-methionine contacts are provided by residues Gly111 and 131-136 (MGDYVL).

Belongs to the RNA methyltransferase TrmD family. As to quaternary structure, homodimer.

It localises to the cytoplasm. The enzyme catalyses guanosine(37) in tRNA + S-adenosyl-L-methionine = N(1)-methylguanosine(37) in tRNA + S-adenosyl-L-homocysteine + H(+). In terms of biological role, specifically methylates guanosine-37 in various tRNAs. This Staphylococcus aureus (strain MRSA252) protein is tRNA (guanine-N(1)-)-methyltransferase.